A 244-amino-acid polypeptide reads, in one-letter code: Probable 2-phosphosulfolactate phosphatase (244 aa).

The protein belongs to the ComB family. Requires Mg(2+) as cofactor.

It catalyses the reaction (2R)-O-phospho-3-sulfolactate + H2O = (2R)-3-sulfolactate + phosphate. The sequence is that of Probable 2-phosphosulfolactate phosphatase from Cyanothece sp. (strain PCC 7425 / ATCC 29141).